We begin with the raw amino-acid sequence, 265 residues long: S-acyl fatty acid synthase thioesterase, medium chain (265 aa).

The residue at position 1 (methionine 1) is an N-acetylmethionine. Residues serine 101 and histidine 237 contribute to the active site.

This sequence belongs to the thioesterase family. As to quaternary structure, interacts (via C-terminus) with FASN. As to expression, detected both in lactating and non-lactating breast epithelium (at protein level). Isoform 2 is up-regulated in bone marrow-derived mononuclear cells of rheumatoid arthritis patients.

It is found in the cytoplasm. The protein localises to the cytosol. It carries out the reaction (9Z)-octadecenoyl-[ACP] + H2O = (9Z)-octadecenoate + holo-[ACP] + H(+). It catalyses the reaction decanoyl-CoA + H2O = decanoate + CoA + H(+). The enzyme catalyses dodecanoyl-CoA + H2O = dodecanoate + CoA + H(+). The catalysed reaction is tetradecanoyl-CoA + H2O = tetradecanoate + CoA + H(+). It carries out the reaction hexadecanoyl-CoA + H2O = hexadecanoate + CoA + H(+). In terms of biological role, contributes to the release of free fatty acids from fatty acid synthase (FASN). Has broad substrate specificity, giving rise to a range of free fatty acids with chain lengths between 10 and 16 carbon atoms (C10 - C16). The chain is S-acyl fatty acid synthase thioesterase, medium chain from Homo sapiens (Human).